A 632-amino-acid polypeptide reads, in one-letter code: Topoisomerase I damage affected protein 7 (632 aa).

A compositionally biased stretch (polar residues) spans 1 to 18 (MNSNSTIGRTTLGESDTI). Disordered regions lie at residues 1 to 33 (MNSNSTIGRTTLGESDTISLSFSEPSSSLNSRS), 87 to 109 (TLVSSTDSSSSSEQDTYSSQYDP), 236 to 267 (SPSTTSNKDTTFPSSSRNTSTSFYSSSLSSTN), 295 to 322 (PTSSSVSSSSSKVPSNRPSSSSSSDDTT), and 335 to 359 (QSTTSSSIPPTTQTPSTSTISTSPI). N-linked (GlcNAc...) asparagine glycosylation occurs at Asn-4. Composition is skewed to low complexity over residues 19 to 33 (SLSFSEPSSSLNSRS) and 87 to 108 (TLVSSTDSSSSSEQDTYSSQYD). Asn-253 carries N-linked (GlcNAc...) asparagine glycosylation. A helical transmembrane segment spans residues 453–473 (IVGSVVGSVGGILICVLVVWF). Asn-488 carries an N-linked (GlcNAc...) asparagine glycan. A compositionally biased stretch (polar residues) spans 506-537 (QAKEASLQAQDSGSQQRNTETASANNPFSNEF). Residues 506 to 551 (QAKEASLQAQDSGSQQRNTETASANNPFSNEFNFKARGNPPPVPPP) are disordered. A Glycyl lysine isopeptide (Lys-Gly) (interchain with G-Cter in ubiquitin) cross-link involves residue Lys-508. Asn-553, Asn-558, and Asn-622 each carry an N-linked (GlcNAc...) asparagine glycan. A Phosphoserine modification is found at Ser-624.

This sequence belongs to the TDA7 family.

It is found in the vacuole membrane. The chain is Topoisomerase I damage affected protein 7 (TDA7) from Saccharomyces cerevisiae (strain Lalvin EC1118 / Prise de mousse) (Baker's yeast).